Consider the following 218-residue polypeptide: Phosphatidylserine decarboxylase proenzyme (218 aa).

S187 functions as the Schiff-base intermediate with substrate; via pyruvic acid in the catalytic mechanism. Residue S187 is modified to Pyruvic acid (Ser); by autocatalysis.

This sequence belongs to the phosphatidylserine decarboxylase family. PSD-A subfamily. As to quaternary structure, heterodimer of a large membrane-associated beta subunit and a small pyruvoyl-containing alpha subunit. The cofactor is pyruvate. Is synthesized initially as an inactive proenzyme. Formation of the active enzyme involves a self-maturation process in which the active site pyruvoyl group is generated from an internal serine residue via an autocatalytic post-translational modification. Two non-identical subunits are generated from the proenzyme in this reaction, and the pyruvate is formed at the N-terminus of the alpha chain, which is derived from the carboxyl end of the proenzyme. The post-translation cleavage follows an unusual pathway, termed non-hydrolytic serinolysis, in which the side chain hydroxyl group of the serine supplies its oxygen atom to form the C-terminus of the beta chain, while the remainder of the serine residue undergoes an oxidative deamination to produce ammonia and the pyruvoyl prosthetic group on the alpha chain.

Its subcellular location is the cell membrane. The catalysed reaction is a 1,2-diacyl-sn-glycero-3-phospho-L-serine + H(+) = a 1,2-diacyl-sn-glycero-3-phosphoethanolamine + CO2. It functions in the pathway phospholipid metabolism; phosphatidylethanolamine biosynthesis; phosphatidylethanolamine from CDP-diacylglycerol: step 2/2. In terms of biological role, catalyzes the formation of phosphatidylethanolamine (PtdEtn) from phosphatidylserine (PtdSer). In Geobacter sulfurreducens (strain ATCC 51573 / DSM 12127 / PCA), this protein is Phosphatidylserine decarboxylase proenzyme.